Reading from the N-terminus, the 433-residue chain is Actin-related protein 4 (433 aa).

Residues 289–317 (GSDEEMNEEPSKPIEQTENNEVSQQDSSV) are disordered. A compositionally biased stretch (polar residues) spans 302-317 (IEQTENNEVSQQDSSV).

This sequence belongs to the actin family. ARP4 subfamily. As to quaternary structure, component of the NuA4 histone acetyltransferase complex, of the INO80 chromatin remodeling complex, and of the SWR1 chromatin remodeling complex.

Its subcellular location is the nucleus. Functionally, chromatin interaction component of the NuA4 histone acetyltransferase complex which is involved in transcriptional activation of selected genes principally by acetylation of nucleosomal histone H4 and H2A. The NuA4 complex is also involved in DNA repair. Is required for NuA4 complex integrity. Component of the SWR1 complex which mediates the ATP-dependent exchange of histone H2A for the H2A variant HZT1 leading to transcriptional regulation of selected genes by chromatin remodeling. Component of the INO80 complex which remodels chromatin by shifting nucleosomes and is involved in DNA repair. The protein is Actin-related protein 4 (alp5) of Schizosaccharomyces pombe (strain 972 / ATCC 24843) (Fission yeast).